The following is a 427-amino-acid chain: Enolase (427 aa).

Q162 is a binding site for (2R)-2-phosphoglycerate. E204 functions as the Proton donor in the catalytic mechanism. Mg(2+) is bound by residues D241, E284, and D311. Positions 336, 365, 366, and 387 each coordinate (2R)-2-phosphoglycerate. K336 (proton acceptor) is an active-site residue.

It belongs to the enolase family. The cofactor is Mg(2+).

It is found in the cytoplasm. Its subcellular location is the secreted. The protein localises to the cell surface. It carries out the reaction (2R)-2-phosphoglycerate = phosphoenolpyruvate + H2O. Its pathway is carbohydrate degradation; glycolysis; pyruvate from D-glyceraldehyde 3-phosphate: step 4/5. Catalyzes the reversible conversion of 2-phosphoglycerate (2-PG) into phosphoenolpyruvate (PEP). It is essential for the degradation of carbohydrates via glycolysis. The sequence is that of Enolase from Corynebacterium kroppenstedtii (strain DSM 44385 / JCM 11950 / CIP 105744 / CCUG 35717).